Reading from the N-terminus, the 808-residue chain is Tegument protein UL47 homolog (808 aa).

2 disordered regions span residues 1 to 21 and 77 to 266; these read MQMP…RENQ and PNEE…SFGE. Residues 83–92 show a composition bias toward basic and acidic residues; sequence DNSRGRDRTR. Residues 133-160 are compositionally biased toward basic residues; that stretch reads SRARSRRRSSSRRRHRNASMHMHFRGGS. Residues 162 to 171 are compositionally biased toward polar residues; sequence RSATGSQNLI. A compositionally biased stretch (basic residues) spans 197–214; it reads RSSRVRRRHRRSSRRRGP. Residues 235-259 show a composition bias toward basic and acidic residues; the sequence is PISDIDQKRLRKNSDTSSRGTRESP.

The protein belongs to the alphaherpesvirinae HHV-1 UL47 family. In terms of assembly, interacts with US3 kinase. Interacts with UL31 and UL34; these interactions seem important for efficient virion nuclear egress. Interacts with UL41/VHS. In terms of processing, phosphorylated by US3. This phosphorylation is required for proper nuclear localization. O-glycosylated.

It localises to the virion tegument. Its subcellular location is the host nucleus. It is found in the host cytoplasm. Tegument protein that can bind to various RNA transcripts. Plays a role in the attenuation of selective viral and cellular mRNA degradation by modulating the activity of host shutoff RNase UL41/VHS. Also plays a role in the primary envelopment of virions in the perinuclear space, probably by interacting with two nuclear egress proteins UL31 and UL34. Plays an important role in the splicing of glycoprotein/gC transcripts and thereby participates in bird-to-bird viral transmission. The chain is Tegument protein UL47 homolog (MDV060) from Gallus gallus (Chicken).